The primary structure comprises 1063 residues: Unconventional myosin-Ic (1063 aa).

M1 carries the post-translational modification N-acetylmethionine. The Myosin motor domain occupies 47–731 (GVQDFVLLEN…TLFATEDALE (685 aa)). ATP is bound by residues N88, Y96, 139 to 148 (SGESGAGKTE), and 192 to 196 (NDNSS). The residue at position 383 (K383) is an N6-methyllysine. S408 is subject to Phosphoserine. An N6-acetyllysine modification is found at K486. A Phosphoserine modification is found at S536. The tract at residues 608 to 630 (LLELVEILKSKEPAYVRCIKPND) is actin-binding. IQ domains follow at residues 734–757 (RQSL…FLRV) and 758–786 (KRSA…AAQT). A phosphoserine mark is found at S864 and S1041. A TH1 domain is found at 885 to 1059 (KDNYPQSVPR…NGHLAVVAPR (175 aa)).

It belongs to the TRAFAC class myosin-kinesin ATPase superfamily. Myosin family. As to quaternary structure, interacts (via its IQ motifs) with CABP1 and CIB1; the interaction with CABP1 and CIB1 is calcium-dependent. Interacts (via tail domain) with PLEKHB1 (via PH domain); the interaction is not affected by the presence or absence of calcium and CALM. Interacts with POLR1A. Interacts with POLR2A. Component of the B-WICH complex, at least composed of SMARCA5/SNF2H, BAZ1B/WSTF, SF3B1, DEK, MYO1C, ERCC6, MYBBP1A and DDX21. Interacts (via its IQ motifs) with CALM; this precludes interaction with YWHAB. Interacts with YWHAB; this precludes interaction with CALM. Interacts with RPS6. Interacts with actin. Interacts with LLPH. Interacts with GLUT4. Interacts (via its IQ motifs) with SH3BGRL3; the interaction is dependent on calcium and takes place at membrane ruffles. Isoform 2 contains a N-acetylmethionine at position 1. Widely expressed.

The protein localises to the cytoplasm. Its subcellular location is the nucleus. It localises to the cell cortex. The protein resides in the cell projection. It is found in the ruffle membrane. The protein localises to the cytoplasmic vesicle. Its subcellular location is the stereocilium membrane. It localises to the nucleolus. The protein resides in the nucleoplasm. In terms of biological role, myosins are actin-based motor molecules with ATPase activity. Unconventional myosins serve in intracellular movements. Their highly divergent tails are presumed to bind to membranous compartments, which would be moved relative to actin filaments. Involved in glucose transporter recycling in response to insulin by regulating movement of intracellular GLUT4-containing vesicles to the plasma membrane. Component of the hair cell's (the sensory cells of the inner ear) adaptation-motor complex. Acts as a mediator of adaptation of mechanoelectrical transduction in stereocilia of vestibular hair cells. Binds phosphoinositides and links the actin cytoskeleton to cellular membranes. Isoform 3 is involved in regulation of transcription. Associated with transcriptional active ribosomal genes. Appears to cooperate with the WICH chromatin-remodeling complex to facilitate transcription. Necessary for the formation of the first phosphodiester bond during transcription initiation. The polypeptide is Unconventional myosin-Ic (MYO1C) (Bos taurus (Bovine)).